A 258-amino-acid polypeptide reads, in one-letter code: MSTESYEDAIKRLGELLSKKSDLGNVAAAKIKKLTDELEELDSNKLDAVERIKSGFLHFKTNNYEKNPTLYNSLAKSQTPKFLVFACADSRVSPSHILNFQLGEAFIVRNIANMVPPYDKTKHSNVGAALEYPITVLNVENILVIGHSCCGGIKGLMAIEDNTAPTKTEFIENWIQICAPAKNRIKQDCKDLSFEDQCTNCEKEAVNVSLGNLLSYPFVRERVVKNKLAIRGAHYDFVKGTFDLWELDFKTTPAFALS.

The N-terminal stretch at 1–28 (MSTESYEDAIKRLGELLSKKSDLGNVAA) is a signal peptide. Positions 24–54 (GNVAAAKIKKLTDELEELDSNKLDAVERIKS) form a coiled coil. Residue Thr35 is modified to Phosphothreonine. Residue Ser95 is modified to Phosphoserine. Position 201 is an S-nitrosocysteine (Cys201).

This sequence belongs to the beta-class carbonic anhydrase family. As to expression, strongly expressed in aerial tissues including leaves, stems, flowers and siliques, and, to a lower extent, in roots.

It is found in the cytoplasm. Its subcellular location is the cytosol. The catalysed reaction is hydrogencarbonate + H(+) = CO2 + H2O. In terms of biological role, reversible hydration of carbon dioxide. In Arabidopsis thaliana (Mouse-ear cress), this protein is Beta carbonic anhydrase 3 (BCA3).